A 668-amino-acid chain; its full sequence is Putative ankyrin repeat protein FPV244 (668 aa).

ANK repeat units follow at residues 40-69 (IPFTAIHQALQLRQIDIVKELIQQNPKLIY), 144-173 (EYMKLIKERIQQDELLIAEMLLKKGIDVNA), 177-206 (YCRTPIHYAAERGNTKMVNLLLSYGADVNI), 210-239 (DDLSVLEYAVDSKNIDTIKAIIDNRSNINK), 272-302 (YKNTPLHYAVQAPSLSRLVPKLLERGIDVNA), 306-336 (KGETPLYLMAKNGYDTENIRTLIMRGADVNA), 340-370 (LYITPLHQASTLDRYKDTVITLLELGANVNA), 374-403 (CDKTPIHYAAVRNNVVIINTLLDYGADIEA), 407-437 (KIGTVLHFALYGTNPYMSVKTLIDRGANVNS), 441-471 (YLSTPLHYACKKNCKPEVIKMLLDNGADVNA), 473-502 (NIRNQYPLLIALEYHGIVNILLHYGAELRD), and 571-602 (NMFYSLDIFVISKNMNLLHHLVNNPIIKEINT).

The chain is Putative ankyrin repeat protein FPV244 from Vertebrata (FPV).